A 602-amino-acid chain; its full sequence is Elongation factor 4 (602 aa).

One can recognise a tr-type G domain in the interval D8–K190. GTP contacts are provided by residues D20 to T25 and N137 to D140.

This sequence belongs to the TRAFAC class translation factor GTPase superfamily. Classic translation factor GTPase family. LepA subfamily.

It is found in the cell inner membrane. It carries out the reaction GTP + H2O = GDP + phosphate + H(+). In terms of biological role, required for accurate and efficient protein synthesis under certain stress conditions. May act as a fidelity factor of the translation reaction, by catalyzing a one-codon backward translocation of tRNAs on improperly translocated ribosomes. Back-translocation proceeds from a post-translocation (POST) complex to a pre-translocation (PRE) complex, thus giving elongation factor G a second chance to translocate the tRNAs correctly. Binds to ribosomes in a GTP-dependent manner. In Cereibacter sphaeroides (strain KD131 / KCTC 12085) (Rhodobacter sphaeroides), this protein is Elongation factor 4.